A 79-amino-acid polypeptide reads, in one-letter code: ATP synthase subunit beta (79 aa).

It belongs to the ATPase alpha/beta chains family. As to quaternary structure, F-type ATPases have 2 components, CF(1) - the catalytic core - and CF(0) - the membrane proton channel. CF(1) has five subunits: alpha(3), beta(3), gamma(1), delta(1), epsilon(1). CF(0) has three main subunits: a(1), b(2) and c(9-12). The alpha and beta chains form an alternating ring which encloses part of the gamma chain. CF(1) is attached to CF(0) by a central stalk formed by the gamma and epsilon chains, while a peripheral stalk is formed by the delta and b chains.

It is found in the cell membrane. It carries out the reaction ATP + H2O + 4 H(+)(in) = ADP + phosphate + 5 H(+)(out). Functionally, produces ATP from ADP in the presence of a proton gradient across the membrane. The catalytic sites are hosted primarily by the beta subunits. This Streptococcus downei (Streptococcus sobrinus) protein is ATP synthase subunit beta (atpD).